The sequence spans 156 residues: uncharacterized protein (156 aa).

The N-acetyltransferase domain maps to 1–145; sequence MIIRKFSSKD…DAILMIKKKP (145 aa).

This sequence belongs to the acetyltransferase family.

It localises to the cytoplasm. This is an uncharacterized protein from Methanocaldococcus jannaschii (strain ATCC 43067 / DSM 2661 / JAL-1 / JCM 10045 / NBRC 100440) (Methanococcus jannaschii).